A 71-amino-acid chain; its full sequence is Translation initiation factor IF-1 (71 aa).

Residues methionine 1 to tyrosine 71 form the S1-like domain.

This sequence belongs to the IF-1 family. Component of the 30S ribosomal translation pre-initiation complex which assembles on the 30S ribosome in the order IF-2 and IF-3, IF-1 and N-formylmethionyl-tRNA(fMet); mRNA recruitment can occur at any time during PIC assembly.

The protein resides in the cytoplasm. One of the essential components for the initiation of protein synthesis. Stabilizes the binding of IF-2 and IF-3 on the 30S subunit to which N-formylmethionyl-tRNA(fMet) subsequently binds. Helps modulate mRNA selection, yielding the 30S pre-initiation complex (PIC). Upon addition of the 50S ribosomal subunit IF-1, IF-2 and IF-3 are released leaving the mature 70S translation initiation complex. The protein is Translation initiation factor IF-1 of Christiangramia forsetii (strain DSM 17595 / CGMCC 1.15422 / KT0803) (Gramella forsetii).